Here is a 266-residue protein sequence, read N- to C-terminus: Probable catechol O-methyltransferase 1 (266 aa).

Ile-56, Glu-78, Ser-86, Glu-106, Val-107, Ala-135, and Asp-162 together coordinate S-adenosyl-L-methionine. Asp-162 contributes to the Mg(2+) binding site. Residue Lys-165 coordinates substrate. Residues Asp-190 and Asn-191 each coordinate Mg(2+). Asn-191 is a binding site for substrate.

This sequence belongs to the class I-like SAM-binding methyltransferase superfamily. Cation-dependent O-methyltransferase family. The cofactor is Mg(2+).

Its subcellular location is the cytoplasm. The protein resides in the nucleus. The enzyme catalyses a catechol + S-adenosyl-L-methionine = a guaiacol + S-adenosyl-L-homocysteine + H(+). In Schizosaccharomyces pombe (strain 972 / ATCC 24843) (Fission yeast), this protein is Probable catechol O-methyltransferase 1.